The primary structure comprises 58 residues: Preprotein translocase subunit SecG (58 aa).

Residues 1–32 (MARKRRKGGEGLVTAIGLVRFYEEVEEKIKVP) are Cytoplasmic-facing. The chain crosses the membrane as a helical span at residues 33-54 (PEAVIGAAFALSIMTIALDLLL). Residues 55-58 (KAAR) are Extracellular-facing.

The protein belongs to the SEC61-beta family. As to quaternary structure, component of the protein translocase complex. Heterotrimer consisting of alpha (SecY), beta (SecG) and gamma (SecE) subunits. Can form oligomers of the heterotrimer.

The protein localises to the cell membrane. In terms of biological role, involved in protein export. The function of the beta subunit is unknown, but it may be involved in stabilization of the trimeric complex. This chain is Preprotein translocase subunit SecG, found in Ignicoccus hospitalis (strain KIN4/I / DSM 18386 / JCM 14125).